The following is a 238-amino-acid chain: CD63 antigen (238 aa).

The Cytoplasmic portion of the chain corresponds to 2-11; it reads AVEGGMKCVK. A helical transmembrane segment spans residues 12 to 32; the sequence is FLLYVLLLAFCACAVGLIAVG. The Extracellular segment spans residues 33 to 51; that stretch reads VGAQLVLSQTIIQGATPGS. The chain crosses the membrane as a helical span at residues 52-72; the sequence is LLPVVIIAVGVFLFLVAFVGC. Residues 73 to 81 lie on the Cytoplasmic side of the membrane; it reads CGACKENYC. The helical transmembrane segment at 82-102 threads the bilayer; that stretch reads LMITFAIFLSLIMLVEVAAAI. At 103–203 the chain is on the extracellular side; that stretch reads AGYVFRDKVM…KIGGWLRKNV (101 aa). N-linked (GlcNAc...) asparagine glycans are attached at residues Asn130, Asn150, and Asn172. Residues 204-224 form a helical membrane-spanning segment; it reads LVVAAAALGIAFVEVLGIVFA. The Cytoplasmic segment spans residues 225 to 238; the sequence is CCLVKSIRSGYEVM. The Lysosomal targeting motif signature appears at 234–238; that stretch reads GYEVM.

This sequence belongs to the tetraspanin (TM4SF) family. Interacts with TIMP1 and ITGB1 and recruits TIMP1 to ITGB1. Interacts with CD9. Identified in a complex with CD9 and ITGB3. Interacts with PMEL. Interacts with KDR/VEGFR2; identified in a complex with ITGB1 and KDR/VEGFR2 and is required to recruit KDR to ITGB1 complexes. Interacts with SYT7. In terms of processing, palmitoylated at a low, basal level in unstimulated platelets. The level of palmitoylation increases when platelets are activated by thrombin (in vitro). Detected in platelets (at protein level). Dysplastic nevi, radial growth phase primary melanomas, hematopoietic cells, tissue macrophages.

The protein resides in the cell membrane. Its subcellular location is the lysosome membrane. It is found in the late endosome membrane. The protein localises to the endosome. It localises to the multivesicular body. The protein resides in the melanosome. Its subcellular location is the secreted. It is found in the extracellular exosome. The protein localises to the cell surface. Functions as a cell surface receptor for TIMP1 and plays a role in the activation of cellular signaling cascades. Plays a role in the activation of ITGB1 and integrin signaling, leading to the activation of AKT, FAK/PTK2 and MAP kinases. Promotes cell survival, reorganization of the actin cytoskeleton, cell adhesion, spreading and migration, via its role in the activation of AKT and FAK/PTK2. Plays a role in VEGFA signaling via its role in regulating the internalization of KDR/VEGFR2. Plays a role in intracellular vesicular transport processes, and is required for normal trafficking of the PMEL luminal domain that is essential for the development and maturation of melanocytes. Plays a role in the adhesion of leukocytes onto endothelial cells via its role in the regulation of SELP trafficking. May play a role in mast cell degranulation in response to Ms4a2/FceRI stimulation, but not in mast cell degranulation in response to other stimuli. The sequence is that of CD63 antigen (CD63) from Homo sapiens (Human).